A 577-amino-acid polypeptide reads, in one-letter code: Hemagglutinin-neuraminidase (577 aa).

Residues 1 to 26 lie on the Intravirion side of the membrane; sequence MDRAVSQVALENDEREAKNTWRLIFR. Residues 27-47 traverse the membrane as a helical segment; the sequence is IAILFLTVVTLAISVASLLYS. Residues 48–577 are Virion surface-facing; the sequence is MGASTPSDLV…DDGVREARSG (530 aa). Asparagine 119 carries N-linked (GlcNAc...) asparagine; by host glycosylation. Residues 124–152 are important for interaction with fusion/F protein; sequence GAPIHDPDYIGGIGKELIVDDASDVTSFY. Intrachain disulfides connect cysteine 172-cysteine 196, cysteine 186-cysteine 247, and cysteine 238-cysteine 251. The interval 234–239 is involved in neuraminidase activity; sequence NRKSCS. N-linked (GlcNAc...) asparagine; by host glycans are attached at residues asparagine 341 and asparagine 433. 2 cysteine pairs are disulfide-bonded: cysteine 344–cysteine 461 and cysteine 455–cysteine 465. 2 N-linked (GlcNAc...) asparagine; by host glycosylation sites follow: asparagine 481 and asparagine 538. Cysteine 531 and cysteine 542 form a disulfide bridge.

This sequence belongs to the paramyxoviruses hemagglutinin-neuraminidase family. As to quaternary structure, homotetramer; composed of disulfide-linked homodimers. Interacts with F protein trimer. Interacts with host CG-1B; this interaction inhibits viral adsorption and replication rather than internalization.

The protein resides in the virion membrane. Its subcellular location is the host cell membrane. The catalysed reaction is Hydrolysis of alpha-(2-&gt;3)-, alpha-(2-&gt;6)-, alpha-(2-&gt;8)- glycosidic linkages of terminal sialic acid residues in oligosaccharides, glycoproteins, glycolipids, colominic acid and synthetic substrates.. Functionally, mediates the viral entry into the host cell together with fusion/F protein. Attaches the virus to sialic acid-containing cell receptors and thereby initiates infection. Binding of HN protein to the receptor induces a conformational change that allows the F protein to trigger virion/cell membranes fusion. In terms of biological role, neuraminidase activity ensures the efficient spread of the virus by dissociating the mature virions from the neuraminic acid containing glycoproteins. This Newcastle disease virus (strain Chicken/United States/LaSota/46) (NDV) protein is Hemagglutinin-neuraminidase (HN).